A 198-amino-acid polypeptide reads, in one-letter code: Ribonuclease HII (198 aa).

The 185-residue stretch at 14–198 (HMIVGVDEAG…FAPVAQLQLV (185 aa)) folds into the RNase H type-2 domain. A divalent metal cation is bound by residues Asp20, Glu21, and Asp110.

It belongs to the RNase HII family. Mn(2+) serves as cofactor. It depends on Mg(2+) as a cofactor.

It localises to the cytoplasm. It catalyses the reaction Endonucleolytic cleavage to 5'-phosphomonoester.. Endonuclease that specifically degrades the RNA of RNA-DNA hybrids. The protein is Ribonuclease HII of Sphingopyxis alaskensis (strain DSM 13593 / LMG 18877 / RB2256) (Sphingomonas alaskensis).